The primary structure comprises 361 residues: Phospho-N-acetylmuramoyl-pentapeptide-transferase (361 aa).

10 consecutive transmembrane segments (helical) span residues 18–38, 73–93, 97–117, 135–155, 168–188, 196–216, 235–255, 263–283, 288–308, and 338–358; these read VFNYLTFRSIVSALTALILVL, TMGGVLIIVAIVISVLLWGDL, FIWVILLVTVAFSAIGWMDDY, LLQSIIGALAAVYLYFSATTG, VLPNLGLFYIVLAYFVIVGSS, GLDGLALMPTVMIGAALGVFA, GAGEVVVFCSALVGAGLGFLW, VFMGDVGSLGLGAALGVTAVV, LVYFLMGGIFVAETLSVILQV, and KVIVRFWIITFILVLCGLATL.

This sequence belongs to the glycosyltransferase 4 family. MraY subfamily. Mg(2+) serves as cofactor.

The protein localises to the cell inner membrane. The enzyme catalyses UDP-N-acetyl-alpha-D-muramoyl-L-alanyl-gamma-D-glutamyl-meso-2,6-diaminopimeloyl-D-alanyl-D-alanine + di-trans,octa-cis-undecaprenyl phosphate = di-trans,octa-cis-undecaprenyl diphospho-N-acetyl-alpha-D-muramoyl-L-alanyl-D-glutamyl-meso-2,6-diaminopimeloyl-D-alanyl-D-alanine + UMP. Its pathway is cell wall biogenesis; peptidoglycan biosynthesis. Catalyzes the initial step of the lipid cycle reactions in the biosynthesis of the cell wall peptidoglycan: transfers peptidoglycan precursor phospho-MurNAc-pentapeptide from UDP-MurNAc-pentapeptide onto the lipid carrier undecaprenyl phosphate, yielding undecaprenyl-pyrophosphoryl-MurNAc-pentapeptide, known as lipid I. The chain is Phospho-N-acetylmuramoyl-pentapeptide-transferase from Coxiella burnetii (strain CbuK_Q154) (Coxiella burnetii (strain Q154)).